An 86-amino-acid polypeptide reads, in one-letter code: Acyl carrier protein (86 aa).

A Carrier domain is found at 10–85 (DKIEQKVIEM…DVIKYIKERQ (76 aa)). At Ser45 the chain carries O-(pantetheine 4'-phosphoryl)serine.

Belongs to the acyl carrier protein (ACP) family. In terms of processing, 4'-phosphopantetheine is transferred from CoA to a specific serine of apo-ACP by AcpS. This modification is essential for activity because fatty acids are bound in thioester linkage to the sulfhydryl of the prosthetic group.

It localises to the cytoplasm. The protein operates within lipid metabolism; fatty acid biosynthesis. Functionally, carrier of the growing fatty acid chain in fatty acid biosynthesis. The chain is Acyl carrier protein from Rickettsia prowazekii (strain Madrid E).